We begin with the raw amino-acid sequence, 565 residues long: NAD-dependent malic enzyme (565 aa).

Tyr104 functions as the Proton donor in the catalytic mechanism. Residue Arg157 coordinates NAD(+). Lys175 serves as the catalytic Proton acceptor. A divalent metal cation-binding residues include Glu246, Asp247, and Asp270. The NAD(+) site is built by Asp270 and Asn418.

It belongs to the malic enzymes family. In terms of assembly, homotetramer. Requires Mg(2+) as cofactor. Mn(2+) serves as cofactor.

It carries out the reaction (S)-malate + NAD(+) = pyruvate + CO2 + NADH. It catalyses the reaction oxaloacetate + H(+) = pyruvate + CO2. This chain is NAD-dependent malic enzyme, found in Klebsiella pneumoniae subsp. pneumoniae (strain ATCC 700721 / MGH 78578).